The sequence spans 689 residues: Acyl-coenzyme A oxidase 1 (689 aa).

FAD contacts are provided by threonine 149 and glycine 188. Residue glutamate 444 is the Proton acceptor of the active site.

Belongs to the acyl-CoA oxidase family. In terms of assembly, heteropentamer composed of five different subunits. Requires FAD as cofactor.

It is found in the peroxisome. It catalyses the reaction a 2,3-saturated acyl-CoA + O2 = a (2E)-enoyl-CoA + H2O2. The protein operates within lipid metabolism; peroxisomal fatty acid beta-oxidation. The protein is Acyl-coenzyme A oxidase 1 (POX1) of Yarrowia lipolytica (strain CLIB 122 / E 150) (Yeast).